The primary structure comprises 301 residues: Uricase (301 aa).

Residues K11 and T58 each act as charge relay system in the active site. Urate contacts are provided by T58, D59, F160, R177, V228, Q229, and N255. Catalysis depends on H257, which acts as the Charge relay system. A Microbody targeting signal motif is present at residues 299-301 (AKL).

This sequence belongs to the uricase family.

The protein localises to the peroxisome. It carries out the reaction urate + O2 + H2O = 5-hydroxyisourate + H2O2. It functions in the pathway purine metabolism; urate degradation; (S)-allantoin from urate: step 1/3. In terms of biological role, catalyzes the oxidation of uric acid to 5-hydroxyisourate, which is further processed to form (S)-allantoin. This is Uricase (uaZ) from Emericella nidulans (strain FGSC A4 / ATCC 38163 / CBS 112.46 / NRRL 194 / M139) (Aspergillus nidulans).